A 426-amino-acid polypeptide reads, in one-letter code: Pyruvate, phosphate dikinase regulatory protein, chloroplastic (426 aa).

The N-terminal 41 residues, 1–41 (MIGCAKPLAAPLQAWARPPSPAGRRLPPSFCAPDTSPALTR), are a transit peptide targeting the chloroplast. Disordered regions lie at residues 1 to 76 (MIGC…HLDR) and 94 to 124 (AALSSASVSAPPVIKSPRPEDAAVAAEDGED). A compositionally biased stretch (low complexity) spans 94-119 (AALSSASVSAPPVIKSPRPEDAAVAA). 153 to 160 (HSVNAALG) serves as a coordination point for ADP.

Belongs to the pyruvate, phosphate/water dikinase regulatory protein family. PDRP subfamily. As to quaternary structure, homodimer at pH 7.5 and homotetramer at pH 8.3. It depends on Mg(2+) as a cofactor. In terms of tissue distribution, leaf mesophyll-cells.

It localises to the plastid. It is found in the chloroplast stroma. It catalyses the reaction N(tele)-phospho-L-histidyl/L-threonyl-[pyruvate, phosphate dikinase] + ADP = N(tele)-phospho-L-histidyl/O-phospho-L-threonyl-[pyruvate, phosphate dikinase] + AMP + H(+). It carries out the reaction N(tele)-phospho-L-histidyl/O-phospho-L-threonyl-[pyruvate, phosphate dikinase] + phosphate + H(+) = N(tele)-phospho-L-histidyl/L-threonyl-[pyruvate, phosphate dikinase] + diphosphate. It functions in the pathway photosynthesis; C4 acid pathway. Its activity is regulated as follows. Regulated by light/dark exposure. Its function is as follows. Bifunctional serine/threonine kinase and phosphorylase involved in the dark/light-mediated regulation of PPDK by catalyzing its phosphorylation/dephosphorylation. Dark/light-induced changes in stromal concentrations of the competing ADP and Pi substrates govern the direction of the reaction. In the dark, phosphorylates the catalytic intermediate of PPDK (PPDK-HisP), inactivating it. Light exposure induces the phosphorolysis reaction that reactivates PPDK. Phosphorylates PPDK at both Ser-528 and Thr-527. Can use ADP as a high specificity substrate and GDP as a lower affinity substrate, but has no activity with UDP. This is Pyruvate, phosphate dikinase regulatory protein, chloroplastic (PDRP1) from Zea mays (Maize).